A 1706-amino-acid chain; its full sequence is Probable ATP-dependent RNA helicase DDX60-like (1706 aa).

A disordered region spans residues 545–580 (RPKEDSSGASGEILQNTKPHQITKKSKKKSFLKEDQ). Residues 551–564 (SGASGEILQNTKPH) are compositionally biased toward polar residues. Residues 565-574 (QITKKSKKKS) are compositionally biased toward basic residues. In terms of domain architecture, Helicase ATP-binding spans 752-919 (LDVVDKNESA…WLQSVKQYWK (168 aa)). Position 765–772 (765–772 (APTSSGKT)) interacts with ATP. Positions 869 to 872 (DEVH) match the DEAH box motif. Positions 1205–1354 (DVKALHTEIT…QFPLSITLVL (150 aa)) constitute a Helicase C-terminal domain.

The protein belongs to the helicase family.

It catalyses the reaction ATP + H2O = ADP + phosphate + H(+). The sequence is that of Probable ATP-dependent RNA helicase DDX60-like from Homo sapiens (Human).